Here is a 392-residue protein sequence, read N- to C-terminus: Stilbene synthase 3 (392 aa).

55–58 (KFNR) contacts substrate. C164 is an active-site residue. Substrate is bound by residues L267 and 305 to 307 (GGP).

The protein belongs to the thiolase-like superfamily. Chalcone/stilbene synthases family. Homodimer.

Its subcellular location is the cytoplasm. The enzyme catalyses 4-coumaroyl-CoA + 3 malonyl-CoA + 3 H(+) = trans-resveratrol + 4 CO2 + 4 CoA. The protein operates within phytoalexin biosynthesis; 3,4',5-trihydroxystilbene biosynthesis; 3,4',5-trihydroxystilbene from trans-4-coumarate: step 2/2. Functionally, mediates resistance to pathogens which are sensitive to stilbenes. This Vitis vinifera (Grape) protein is Stilbene synthase 3.